Here is a 213-residue protein sequence, read N- to C-terminus: Negative modulator of initiation of replication (213 aa).

3 interaction with DNA regions span residues A116–V117, R145–Y149, and N179–K185.

The protein belongs to the SeqA family. In terms of assembly, homodimer. Polymerizes to form helical filaments.

The protein localises to the cytoplasm. In terms of biological role, negative regulator of replication initiation, which contributes to regulation of DNA replication and ensures that replication initiation occurs exactly once per chromosome per cell cycle. Binds to pairs of hemimethylated GATC sequences in the oriC region, thus preventing assembly of replication proteins and re-initiation at newly replicated origins. Repression is relieved when the region becomes fully methylated. This Haemophilus parainfluenzae (strain T3T1) protein is Negative modulator of initiation of replication.